The following is a 410-amino-acid chain: Dihydrolipoyllysine-residue acetyltransferase component of pyruvate dehydrogenase complex (410 aa).

The region spanning 1–69 (MPDIGTDLVE…TTGSLIAILN (69 aa)) is the Lipoyl-binding domain. Lysine 35 is subject to N6-lipoyllysine. The disordered stretch occupies residues 81 to 100 (SSSYSFKNSKNTSTNSNLGN). A Peripheral subunit-binding (PSBD) domain is found at 113-150 (HATPTVRRLARKFDIKLENITGTGRKGRILKEDVISYK). Residue histidine 383 is part of the active site.

This sequence belongs to the 2-oxoacid dehydrogenase family. In terms of assembly, forms a 24-polypeptide structural core with octahedral symmetry. (R)-lipoate is required as a cofactor.

The catalysed reaction is N(6)-[(R)-dihydrolipoyl]-L-lysyl-[protein] + acetyl-CoA = N(6)-[(R)-S(8)-acetyldihydrolipoyl]-L-lysyl-[protein] + CoA. The pyruvate dehydrogenase complex catalyzes the overall conversion of pyruvate to acetyl-CoA and CO(2). It contains multiple copies of three enzymatic components: pyruvate dehydrogenase (E1), dihydrolipoamide acetyltransferase (E2) and lipoamide dehydrogenase (E3). This Buchnera aphidicola subsp. Baizongia pistaciae (strain Bp) protein is Dihydrolipoyllysine-residue acetyltransferase component of pyruvate dehydrogenase complex (aceF).